We begin with the raw amino-acid sequence, 416 residues long: D-amino acid dehydrogenase (416 aa).

Position 3 to 17 (3 to 17 (VIVLGAGIVGVTSAY)) interacts with FAD.

It belongs to the DadA oxidoreductase family. Requires FAD as cofactor.

It carries out the reaction a D-alpha-amino acid + A + H2O = a 2-oxocarboxylate + AH2 + NH4(+). The protein operates within amino-acid degradation; D-alanine degradation; NH(3) and pyruvate from D-alanine: step 1/1. Oxidative deamination of D-amino acids. The chain is D-amino acid dehydrogenase from Rhizobium johnstonii (strain DSM 114642 / LMG 32736 / 3841) (Rhizobium leguminosarum bv. viciae).